Reading from the N-terminus, the 622-residue chain is Kinesin-like protein KIFC1 (622 aa).

The interval 1 to 88 (MKEALEPAKK…KRPGKRPDWD (88 aa)) is disordered. The segment covering 32-41 (SSLSQPQGPT) has biased composition (polar residues). Positions 95–264 (DLTEELKCYR…QELKGNIRVF (170 aa)) form a coiled coil. Residues 260-612 (NIRVFCRVRP…LRFASKVNQC (353 aa)) enclose the Kinesin motor domain. The disordered stretch occupies residues 279-323 (PGFLLFPHGPAGPSDPPTRLSLSRSDDRRSTLTRAPAPTTRHDFS). T309 is subject to Phosphothreonine. Residue 360–367 (GQTGSGKT) participates in ATP binding.

It belongs to the TRAFAC class myosin-kinesin ATPase superfamily. Kinesin family. NCD subfamily. As to quaternary structure, binds NUBP1 and NUBP2. Interacts with PPP1R42.

It is found in the nucleus. The protein resides in the cytoplasm. It localises to the cytoskeleton. Its subcellular location is the microtubule organizing center. The protein localises to the centrosome. It is found in the spindle. The protein resides in the early endosome. Functionally, minus end-directed microtubule-dependent motor required for bipolar spindle formation. May contribute to movement of early endocytic vesicles. Regulates cilium formation and structure. This chain is Kinesin-like protein KIFC1, found in Cricetulus griseus (Chinese hamster).